Here is a 156-residue protein sequence, read N- to C-terminus: 6,7-dimethyl-8-ribityllumazine synthase (156 aa).

5-amino-6-(D-ribitylamino)uracil contacts are provided by residues Phe-22, 57 to 59 (AVE), and 81 to 83 (CVI). 86 to 87 (GT) provides a ligand contact to (2S)-2-hydroxy-3-oxobutyl phosphate. Catalysis depends on His-89, which acts as the Proton donor. Phe-114 is a 5-amino-6-(D-ribitylamino)uracil binding site. A (2S)-2-hydroxy-3-oxobutyl phosphate-binding site is contributed by Arg-128.

The protein belongs to the DMRL synthase family. In terms of assembly, forms an icosahedral capsid composed of 60 subunits, arranged as a dodecamer of pentamers.

It catalyses the reaction (2S)-2-hydroxy-3-oxobutyl phosphate + 5-amino-6-(D-ribitylamino)uracil = 6,7-dimethyl-8-(1-D-ribityl)lumazine + phosphate + 2 H2O + H(+). Its pathway is cofactor biosynthesis; riboflavin biosynthesis; riboflavin from 2-hydroxy-3-oxobutyl phosphate and 5-amino-6-(D-ribitylamino)uracil: step 1/2. Catalyzes the formation of 6,7-dimethyl-8-ribityllumazine by condensation of 5-amino-6-(D-ribitylamino)uracil with 3,4-dihydroxy-2-butanone 4-phosphate. This is the penultimate step in the biosynthesis of riboflavin. The sequence is that of 6,7-dimethyl-8-ribityllumazine synthase from Tolumonas auensis (strain DSM 9187 / NBRC 110442 / TA 4).